The sequence spans 153 residues: NADPH-dependent 7-cyano-7-deazaguanine reductase (153 aa).

The active-site Thioimide intermediate is the Cys-51. Asp-58 serves as the catalytic Proton donor. Substrate is bound by residues 73 to 75 (VES) and 92 to 93 (HE).

Belongs to the GTP cyclohydrolase I family. QueF type 1 subfamily.

It localises to the cytoplasm. The enzyme catalyses 7-aminomethyl-7-carbaguanine + 2 NADP(+) = 7-cyano-7-deazaguanine + 2 NADPH + 3 H(+). Its pathway is tRNA modification; tRNA-queuosine biosynthesis. Its function is as follows. Catalyzes the NADPH-dependent reduction of 7-cyano-7-deazaguanine (preQ0) to 7-aminomethyl-7-deazaguanine (preQ1). This chain is NADPH-dependent 7-cyano-7-deazaguanine reductase, found in Granulibacter bethesdensis (strain ATCC BAA-1260 / CGDNIH1).